A 318-amino-acid polypeptide reads, in one-letter code: Ribosomal RNA small subunit methyltransferase A (318 aa).

S-adenosyl-L-methionine-binding residues include Asn40, Val42, Gly67, Glu88, Asp118, and Asn137. Over residues 295–305 (SADRGGTDREG) the composition is skewed to basic and acidic residues. Residues 295–318 (SADRGGTDREGTSPPTAGQGAPAR) form a disordered region.

It belongs to the class I-like SAM-binding methyltransferase superfamily. rRNA adenine N(6)-methyltransferase family. RsmA subfamily.

The protein localises to the cytoplasm. It carries out the reaction adenosine(1518)/adenosine(1519) in 16S rRNA + 4 S-adenosyl-L-methionine = N(6)-dimethyladenosine(1518)/N(6)-dimethyladenosine(1519) in 16S rRNA + 4 S-adenosyl-L-homocysteine + 4 H(+). Functionally, specifically dimethylates two adjacent adenosines (A1518 and A1519) in the loop of a conserved hairpin near the 3'-end of 16S rRNA in the 30S particle. May play a critical role in biogenesis of 30S subunits. In Mycolicibacterium paratuberculosis (strain ATCC BAA-968 / K-10) (Mycobacterium paratuberculosis), this protein is Ribosomal RNA small subunit methyltransferase A.